A 180-amino-acid polypeptide reads, in one-letter code: Putative methyltransferase YrhH (180 aa).

Belongs to the methyltransferase superfamily.

This Bacillus subtilis (strain 168) protein is Putative methyltransferase YrhH (yrhH).